The primary structure comprises 203 residues: Urease accessory protein UreG (203 aa).

Position 13 to 20 (13 to 20) interacts with GTP; it reads GPVGSGKT.

It belongs to the SIMIBI class G3E GTPase family. UreG subfamily. As to quaternary structure, homodimer. UreD, UreF and UreG form a complex that acts as a GTP-hydrolysis-dependent molecular chaperone, activating the urease apoprotein by helping to assemble the nickel containing metallocenter of UreC. The UreE protein probably delivers the nickel.

The protein localises to the cytoplasm. Functionally, facilitates the functional incorporation of the urease nickel metallocenter. This process requires GTP hydrolysis, probably effectuated by UreG. This chain is Urease accessory protein UreG, found in Methylobacillus flagellatus (strain ATCC 51484 / DSM 6875 / VKM B-1610 / KT).